The chain runs to 147 residues: Small ribosomal subunit protein uS12 (147 aa).

This sequence belongs to the universal ribosomal protein uS12 family. As to quaternary structure, part of the 30S ribosomal subunit.

Its function is as follows. With S4 and S5 plays an important role in translational accuracy. Located at the interface of the 30S and 50S subunits. This Thermococcus kodakarensis (strain ATCC BAA-918 / JCM 12380 / KOD1) (Pyrococcus kodakaraensis (strain KOD1)) protein is Small ribosomal subunit protein uS12.